A 274-amino-acid polypeptide reads, in one-letter code: Dermonecrotic toxin SdSicTox-betaIIB1ai (274 aa).

Residue histidine 5 is part of the active site. Mg(2+) is bound by residues glutamate 25 and aspartate 27. The active-site Nucleophile is histidine 41. Intrachain disulfides connect cysteine 45/cysteine 51 and cysteine 47/cysteine 190. Residue aspartate 85 coordinates Mg(2+).

The protein belongs to the arthropod phospholipase D family. Class II subfamily. Mg(2+) is required as a cofactor. In terms of tissue distribution, expressed by the venom gland.

It is found in the secreted. The enzyme catalyses an N-(acyl)-sphingosylphosphocholine = an N-(acyl)-sphingosyl-1,3-cyclic phosphate + choline. The catalysed reaction is an N-(acyl)-sphingosylphosphoethanolamine = an N-(acyl)-sphingosyl-1,3-cyclic phosphate + ethanolamine. It carries out the reaction a 1-acyl-sn-glycero-3-phosphocholine = a 1-acyl-sn-glycero-2,3-cyclic phosphate + choline. It catalyses the reaction a 1-acyl-sn-glycero-3-phosphoethanolamine = a 1-acyl-sn-glycero-2,3-cyclic phosphate + ethanolamine. Functionally, dermonecrotic toxins cleave the phosphodiester linkage between the phosphate and headgroup of certain phospholipids (sphingolipid and lysolipid substrates), forming an alcohol (often choline) and a cyclic phosphate. This toxin acts on sphingomyelin (SM). It may also act on ceramide phosphoethanolamine (CPE), lysophosphatidylcholine (LPC) and lysophosphatidylethanolamine (LPE), but not on lysophosphatidylserine (LPS), and lysophosphatidylglycerol (LPG). It acts by transphosphatidylation, releasing exclusively cyclic phosphate products as second products. Induces dermonecrosis, hemolysis, increased vascular permeability, edema, inflammatory response, and platelet aggregation. This chain is Dermonecrotic toxin SdSicTox-betaIIB1ai, found in Sicarius cf. damarensis (strain GJB-2008) (Six-eyed sand spider).